Here is a 207-residue protein sequence, read N- to C-terminus: Dephospho-CoA kinase (207 aa).

In terms of domain architecture, DPCK spans 10-207 (ILGLTGGIGS…FYLTLRGGQS (198 aa)). An ATP-binding site is contributed by 18–23 (GSGKSA).

The protein belongs to the CoaE family.

The protein resides in the cytoplasm. It catalyses the reaction 3'-dephospho-CoA + ATP = ADP + CoA + H(+). It functions in the pathway cofactor biosynthesis; coenzyme A biosynthesis; CoA from (R)-pantothenate: step 5/5. In terms of biological role, catalyzes the phosphorylation of the 3'-hydroxyl group of dephosphocoenzyme A to form coenzyme A. This is Dephospho-CoA kinase from Pseudomonas syringae pv. tomato (strain ATCC BAA-871 / DC3000).